Here is a 101-residue protein sequence, read N- to C-terminus: NAD(P)H-quinone oxidoreductase subunit 4L, chloroplastic (101 aa).

3 consecutive transmembrane segments (helical) span residues 2-22 (MTEH…YGLI), 32-52 (MCLE…SDLF), and 61-81 (IFSI…PAIV).

Belongs to the complex I subunit 4L family. NDH is composed of at least 16 different subunits, 5 of which are encoded in the nucleus.

It is found in the plastid. The protein resides in the chloroplast thylakoid membrane. It catalyses the reaction a plastoquinone + NADH + (n+1) H(+)(in) = a plastoquinol + NAD(+) + n H(+)(out). The enzyme catalyses a plastoquinone + NADPH + (n+1) H(+)(in) = a plastoquinol + NADP(+) + n H(+)(out). Functionally, NDH shuttles electrons from NAD(P)H:plastoquinone, via FMN and iron-sulfur (Fe-S) centers, to quinones in the photosynthetic chain and possibly in a chloroplast respiratory chain. The immediate electron acceptor for the enzyme in this species is believed to be plastoquinone. Couples the redox reaction to proton translocation, and thus conserves the redox energy in a proton gradient. In Liriodendron tulipifera (Tuliptree), this protein is NAD(P)H-quinone oxidoreductase subunit 4L, chloroplastic.